The following is a 596-amino-acid chain: Elongation factor 4 (596 aa).

The tr-type G domain occupies 2–184; it reads KHIRNFSIIA…EIVAKIPPPV (183 aa). Residues 14-19 and 131-134 each bind GTP; these read DHGKST and NKID.

The protein belongs to the TRAFAC class translation factor GTPase superfamily. Classic translation factor GTPase family. LepA subfamily.

The protein localises to the cell inner membrane. It catalyses the reaction GTP + H2O = GDP + phosphate + H(+). Required for accurate and efficient protein synthesis under certain stress conditions. May act as a fidelity factor of the translation reaction, by catalyzing a one-codon backward translocation of tRNAs on improperly translocated ribosomes. Back-translocation proceeds from a post-translocation (POST) complex to a pre-translocation (PRE) complex, thus giving elongation factor G a second chance to translocate the tRNAs correctly. Binds to ribosomes in a GTP-dependent manner. This chain is Elongation factor 4, found in Shewanella denitrificans (strain OS217 / ATCC BAA-1090 / DSM 15013).